A 478-amino-acid chain; its full sequence is Aspartyl/glutamyl-tRNA(Asn/Gln) amidotransferase subunit B (478 aa).

It belongs to the GatB/GatE family. GatB subfamily. As to quaternary structure, heterotrimer of A, B and C subunits.

The catalysed reaction is L-glutamyl-tRNA(Gln) + L-glutamine + ATP + H2O = L-glutaminyl-tRNA(Gln) + L-glutamate + ADP + phosphate + H(+). The enzyme catalyses L-aspartyl-tRNA(Asn) + L-glutamine + ATP + H2O = L-asparaginyl-tRNA(Asn) + L-glutamate + ADP + phosphate + 2 H(+). In terms of biological role, allows the formation of correctly charged Asn-tRNA(Asn) or Gln-tRNA(Gln) through the transamidation of misacylated Asp-tRNA(Asn) or Glu-tRNA(Gln) in organisms which lack either or both of asparaginyl-tRNA or glutaminyl-tRNA synthetases. The reaction takes place in the presence of glutamine and ATP through an activated phospho-Asp-tRNA(Asn) or phospho-Glu-tRNA(Gln). The sequence is that of Aspartyl/glutamyl-tRNA(Asn/Gln) amidotransferase subunit B from Lachnoclostridium phytofermentans (strain ATCC 700394 / DSM 18823 / ISDg) (Clostridium phytofermentans).